The primary structure comprises 360 residues: S-adenosylmethionine:tRNA ribosyltransferase-isomerase (360 aa).

Belongs to the QueA family. In terms of assembly, monomer.

The protein localises to the cytoplasm. The enzyme catalyses 7-aminomethyl-7-carbaguanosine(34) in tRNA + S-adenosyl-L-methionine = epoxyqueuosine(34) in tRNA + adenine + L-methionine + 2 H(+). It functions in the pathway tRNA modification; tRNA-queuosine biosynthesis. In terms of biological role, transfers and isomerizes the ribose moiety from AdoMet to the 7-aminomethyl group of 7-deazaguanine (preQ1-tRNA) to give epoxyqueuosine (oQ-tRNA). The chain is S-adenosylmethionine:tRNA ribosyltransferase-isomerase from Rhodopseudomonas palustris (strain ATCC BAA-98 / CGA009).